Reading from the N-terminus, the 201-residue chain is LexA repressor (201 aa).

A DNA-binding region (H-T-H motif) is located at residues 28–48; that stretch reads LREIAAQLGISGTLGVMKHLE. Residues Ser-120 and Lys-157 each act as for autocatalytic cleavage activity in the active site.

It belongs to the peptidase S24 family. As to quaternary structure, homodimer.

It catalyses the reaction Hydrolysis of Ala-|-Gly bond in repressor LexA.. In terms of biological role, represses a number of genes involved in the response to DNA damage (SOS response), including recA and lexA. In the presence of single-stranded DNA, RecA interacts with LexA causing an autocatalytic cleavage which disrupts the DNA-binding part of LexA, leading to derepression of the SOS regulon and eventually DNA repair. In Citrifermentans bemidjiense (strain ATCC BAA-1014 / DSM 16622 / JCM 12645 / Bem) (Geobacter bemidjiensis), this protein is LexA repressor.